The following is a 371-amino-acid chain: GDP-perosamine synthase (371 aa).

K186 is modified (N6-(pyridoxal phosphate)lysine).

It belongs to the DegT/DnrJ/EryC1 family. Homodimer. The cofactor is pyridoxal 5'-phosphate.

It catalyses the reaction GDP-alpha-D-perosamine + 2-oxoglutarate = GDP-4-dehydro-alpha-D-rhamnose + L-glutamate. Its pathway is bacterial outer membrane biogenesis; LPS O-antigen biosynthesis. In terms of biological role, catalyzes the synthesis of GDP-perosamine from GDP-4-keto-6-deoxy-D-mannose and L-glutamate. Can use only L-glutamate as amino donor. In vitro, can also use GDP-4-keto-3,6-dideoxymannose to produce GDP-3-deoxyperosamine. Involved in the formation of S-LPS, which is required for attachment of the protein S-layer to the outer membrane surface. The polypeptide is GDP-perosamine synthase (Caulobacter vibrioides (strain ATCC 19089 / CIP 103742 / CB 15) (Caulobacter crescentus)).